The following is a 280-amino-acid chain: Large ribosomal subunit protein uL2 (280 aa).

2 disordered regions span residues 29 to 58 (PEKS…GGGH) and 225 to 280 (VMNP…NKKR). Positions 45-58 (SHGHITTRHRGGGH) are enriched in basic residues. Over residues 253 to 269 (KEGRTRKPKRYSDDMIV) the composition is skewed to basic and acidic residues. The segment covering 270–280 (RRRRANKNKKR) has biased composition (basic residues).

It belongs to the universal ribosomal protein uL2 family. Part of the 50S ribosomal subunit. Forms a bridge to the 30S subunit in the 70S ribosome.

Functionally, one of the primary rRNA binding proteins. Required for association of the 30S and 50S subunits to form the 70S ribosome, for tRNA binding and peptide bond formation. It has been suggested to have peptidyltransferase activity; this is somewhat controversial. Makes several contacts with the 16S rRNA in the 70S ribosome. This Corynebacterium glutamicum (strain R) protein is Large ribosomal subunit protein uL2.